A 227-amino-acid chain; its full sequence is UPF0173 metal-dependent hydrolase BCE33L4354 (227 aa).

It belongs to the UPF0173 family.

The protein is UPF0173 metal-dependent hydrolase BCE33L4354 of Bacillus cereus (strain ZK / E33L).